The following is a 340-amino-acid chain: Sodium/bile acid cotransporter 7 (340 aa).

Residues 1–10 are Cytoplasmic-facing; it reads MRLLERVRKE. Residues 11–31 form a helical membrane-spanning segment; it reads WFMVGIVVAIGAAKLEPSVGV. Residues 32–37 are Extracellular-facing; the sequence is NGGPLK. Residues 38 to 58 form a helical membrane-spanning segment; it reads PEITVSYIAVATIFFNSGLSL. At 59 to 71 the chain is on the cytoplasmic side; that stretch reads KTEELTSALVHLK. The chain crosses the membrane as a helical span at residues 72 to 92; that stretch reads LHLFIQVFTLAFFPTTIWLFL. The Extracellular segment spans residues 93–116; it reads QLLSVTSINEWLLKGLQTVGCMPP. The chain crosses the membrane as a helical span at residues 117-137; the sequence is PVSSAVILTKAVGGNEAAAIF. A topological domain (cytoplasmic) is located at residue Asn-138. A helical membrane pass occupies residues 139–159; sequence SAFGSFLGIVVTPVLLLLFLG. Over 160 to 163 the chain is Extracellular; it reads SSSS. Residues 164–184 form a helical membrane-spanning segment; it reads VPFTSIFSQLFMTVVVPLVIG. The Cytoplasmic segment spans residues 185–201; sequence QIVRRYIKDWLERKKPP. The chain crosses the membrane as a helical span at residues 202–222; it reads FGVVSSSVLLMIIYTTFCDTF. The Extracellular portion of the chain corresponds to 223 to 234; sequence SNPNIDLDKFSL. A helical membrane pass occupies residues 235-255; that stretch reads ILILFIIVSIQLSFMLLTFVF. Residues 256–270 are Cytoplasmic-facing; that stretch reads STRNNSGFTPADTVA. A helical transmembrane segment spans residues 271 to 291; that stretch reads IIFCSTHKSLTLGIPMLKIVF. The Extracellular portion of the chain corresponds to 292–298; the sequence is AGHEHLS. Residues 299-319 form a helical membrane-spanning segment; it reads LISLPLLIYHPAQILLGSVLV. The Cytoplasmic portion of the chain corresponds to 320–340; that stretch reads PTIKSWMVSRQKGVKLTRPTV.

This sequence belongs to the bile acid:sodium symporter (BASS) (TC 2.A.28) family. As to expression, strongly expressed in liver, adrenal gland, small intestine and colon. Moderately expressed in heart, lung, kidney and spleen. Weakly expressed in brain.

It localises to the cell membrane. The protein resides in the endoplasmic reticulum membrane. Its subcellular location is the golgi apparatus membrane. In terms of biological role, involved in teeth and skeletal development. Has an essential role in the biosynthesis and trafficking of glycosaminoglycans and glycoproteins to produce a proper functioning extracellular matrix. Required for extracellular matrix mineralization. Also involved in the regulation of cellular calcium homeostasis. Does not show transport activity towards bile acids or steroid sulfates (including taurocholate, cholate, chenodeoxycholate, estrone-3-sulfate, dehydroepiandrosterone sulfate (DHEAS) and pregnenolone sulfate). The chain is Sodium/bile acid cotransporter 7 (Slc10a7) from Rattus norvegicus (Rat).